A 493-amino-acid chain; its full sequence is MKTSFFSLGASTVTTKNVGRITQIIGPVLDAAFLPGQMPNIYNAIIVKGQNPAGQEINVTCEVQQLLGDNRVRAVAMSATDGLTRGMEVFDTGAPLSVPVGEVTLGRIFNVLGEPVDELGPVNATITSVIHRSAPAFTQLDTKLSIFETGIKVVDLLAPYRRGGKIGLFGGAGVGKTVLIMELINNIAKAHGGVSVFGGVGERTREGNDLYMEMKESKVINEENLSESKVALVYGQMNEPPGARMRVGLTALTMAEYFRDVNKQDVLLFIDNIFRFVQAGSEVSALLGRMPSAVGYQPTLGTEMGGLQERITSTKEGSITSIQAVYVPADDLTDPAPATTFAHLDATTVLSRGLAAKGIYPAVDPLDSTSTMLQPWIVGAEHYETAQGVKKTLQRYKELQDIIAILGLDELSEDDRLTVARARKIERFLSQPFFVAEVFTGSPGKYVSLAETIKGFQMILSGELDHLPEQAFYLVGNIDEATAKAATIQVESA.

Residue 170–177 (GGAGVGKT) coordinates ATP.

It belongs to the ATPase alpha/beta chains family. In terms of assembly, F-type ATPases have 2 components, CF(1) - the catalytic core - and CF(0) - the membrane proton channel. CF(1) has five subunits: alpha(3), beta(3), gamma(1), delta(1), epsilon(1). CF(0) has four main subunits: a(1), b(1), b'(1) and c(9-12).

It is found in the plastid. It localises to the chloroplast thylakoid membrane. The catalysed reaction is ATP + H2O + 4 H(+)(in) = ADP + phosphate + 5 H(+)(out). Its function is as follows. Produces ATP from ADP in the presence of a proton gradient across the membrane. The catalytic sites are hosted primarily by the beta subunits. The protein is ATP synthase subunit beta, chloroplastic of Staurastrum punctulatum (Green alga).